Here is a 64-residue protein sequence, read N- to C-terminus: Prokaryotic ubiquitin-like protein Pup (64 aa).

The disordered stretch occupies residues 1 to 37 (MAQEQTKRGGGGGDDDDIAGSTAAGQERREKLTEETD). Positions 21 to 58 (STAAGQERREKLTEETDDLLDEIDDVLEENAEDFVRAY) are ARC ATPase binding. Positions 23-52 (AAGQERREKLTEETDDLLDEIDDVLEENAE) form a coiled coil. Gln-64 carries the deamidated glutamine modification. Residue Gln-64 forms an Isoglutamyl lysine isopeptide (Gln-Lys) (interchain with K-? in acceptor proteins) linkage.

The protein belongs to the prokaryotic ubiquitin-like protein family. In terms of assembly, strongly interacts with the proteasome-associated ATPase ARC through a hydrophobic interface; the interacting region of Pup lies in its C-terminal half. There is one Pup binding site per ARC hexamer ring. In terms of processing, is modified by deamidation of its C-terminal glutamine to glutamate by the deamidase Dop, a prerequisite to the subsequent pupylation process.

It functions in the pathway protein degradation; proteasomal Pup-dependent pathway. Functionally, protein modifier that is covalently attached to lysine residues of substrate proteins, thereby targeting them for proteasomal degradation. The tagging system is termed pupylation. This is Prokaryotic ubiquitin-like protein Pup from Mycobacterium tuberculosis (strain ATCC 25177 / H37Ra).